The following is a 154-amino-acid chain: CASP-like protein ARALYDRAFT_485429 (154 aa).

The Cytoplasmic segment spans residues 1–12 (MENVPGSFGTSA). The helical transmembrane segment at 13-33 (SFALRFGQTIFSAASLIFMCF) threads the bilayer. The Extracellular segment spans residues 34 to 41 (DYDFYDFT). The helical transmembrane segment at 42–62 (TFCYLATVMAIVTPWSILLAL) threads the bilayer. Residues 63-81 (TDTYSVLVKLLPQELRVLS) lie on the Cytoplasmic side of the membrane. The helical transmembrane segment at 82–102 (IVFAGDFVLSFLSLGGACAVA) threads the bilayer. Over 103 to 128 (SATELLASADGKICDGNLCIQYQVSA) the chain is Extracellular. A helical transmembrane segment spans residues 129 to 149 (ALAFLCWFLLLASALFNFWSL). Topologically, residues 150–154 (PSLYY) are cytoplasmic.

Belongs to the Casparian strip membrane proteins (CASP) family. In terms of assembly, homodimer and heterodimers.

It localises to the cell membrane. The chain is CASP-like protein ARALYDRAFT_485429 from Arabidopsis lyrata subsp. lyrata (Lyre-leaved rock-cress).